A 141-amino-acid polypeptide reads, in one-letter code: Large ribosomal subunit protein uL11 (141 aa).

This sequence belongs to the universal ribosomal protein uL11 family. Part of the ribosomal stalk of the 50S ribosomal subunit. Interacts with L10 and the large rRNA to form the base of the stalk. L10 forms an elongated spine to which L12 dimers bind in a sequential fashion forming a multimeric L10(L12)X complex. One or more lysine residues are methylated.

Forms part of the ribosomal stalk which helps the ribosome interact with GTP-bound translation factors. In Coprothermobacter proteolyticus (strain ATCC 35245 / DSM 5265 / OCM 4 / BT), this protein is Large ribosomal subunit protein uL11.